The chain runs to 564 residues: Septin-9 (564 aa).

Methionine 1 carries the post-translational modification N-acetylmethionine. Serine 12 carries the post-translational modification Phosphoserine. 2 positions are modified to phosphothreonine: threonine 24 and threonine 31. Disordered stretches follow at residues 38–165 (VASS…PVTD) and 178–224 (PAEA…DSEV). Lysine 44 carries the N6-acetyllysine modification. Serine 64, serine 67, and serine 71 each carry phosphoserine. A compositionally biased stretch (polar residues) spans 95 to 109 (DISSKQVESTASTPG). A compositionally biased stretch (basic and acidic residues) spans 116-134 (KRAEVLGHKTPEPVPRRTE). A Phosphothreonine modification is found at threonine 125. The span at 190 to 203 (TLENSEAPMSQLQS) shows a compositional bias: polar residues. Tyrosine 258 bears the Phosphotyrosine mark. The Septin-type G domain maps to 275–546 (QGFEFNIMVV…EAYRVKRLNE (272 aa)). Residues 285–292 (GQSGLGKS) form a G1 motif region. 285 to 292 (GQSGLGKS) is a binding site for GTP. Serine 307 and serine 312 each carry phosphoserine. GTP contacts are provided by residues threonine 319, glycine 345, 425-433 (KADTLTLEE), glycine 480, and arginine 495. A G3 motif region spans residues 342-345 (DTPG). Residues 424–427 (AKAD) are G4 motif.

The protein belongs to the TRAFAC class TrmE-Era-EngA-EngB-Septin-like GTPase superfamily. Septin GTPase family. In terms of assembly, septins polymerize into heterooligomeric protein complexes that form filaments, and associate with cellular membranes, actin filaments, and microtubules. GTPase activity is required for filament formation. Interacts with SEPTIN2, SEPTIN6, SEPTIN7, SEPTIN11 and SEPTIN14. Interacts with RTKN and ARHGEF18. As to expression, expressed in the brain, mainly in the perikarya and processes of astrocytes in the cerebellum, dentate gyrus and corpus callosum (at protein level). In the sciatic nerve, highly expressed in Schwann cells (at protein level). Isoforms are differentially expressed in testes, kidney, liver, heart, spleen and brain. Undetectable in skeletal muscle.

The protein resides in the cytoplasm. It is found in the cytoskeleton. Functionally, filament-forming cytoskeletal GTPase. May play a role in cytokinesis (Potential). The sequence is that of Septin-9 from Rattus norvegicus (Rat).